Consider the following 451-residue polypeptide: Phosphoglucosamine mutase (451 aa).

S101 (phosphoserine intermediate) is an active-site residue. Mg(2+) is bound by residues S101, D240, D242, and D244. S101 carries the phosphoserine modification.

Belongs to the phosphohexose mutase family. Mg(2+) is required as a cofactor. Activated by phosphorylation.

It catalyses the reaction alpha-D-glucosamine 1-phosphate = D-glucosamine 6-phosphate. Its function is as follows. Catalyzes the conversion of glucosamine-6-phosphate to glucosamine-1-phosphate. This Streptococcus pyogenes serotype M12 (strain MGAS2096) protein is Phosphoglucosamine mutase.